The primary structure comprises 103 residues: Small ribosomal subunit protein uS10 (103 aa).

The protein belongs to the universal ribosomal protein uS10 family. In terms of assembly, part of the 30S ribosomal subunit.

Functionally, involved in the binding of tRNA to the ribosomes. This chain is Small ribosomal subunit protein uS10, found in Chlorobium phaeobacteroides (strain DSM 266 / SMG 266 / 2430).